Reading from the N-terminus, the 505-residue chain is Betaine aldehyde dehydrogenase 1 (505 aa).

Position 163–172 (163–172 (WNYPLLMATW)) interacts with betaine aldehyde. 240–245 (GSTETG) is an NAD(+) binding site. Betaine aldehyde is bound by residues glutamate 262, 294 to 297 (QVCS), and cysteine 455. Catalysis depends on residues glutamate 262 and cysteine 296. Residues 262–263 (EL) and cysteine 296 each bind 4-aminobutanal. Tryptophan 461 provides a ligand contact to 4-aminobutanal. The Microbody targeting signal signature appears at 503 to 505 (SKL).

Belongs to the aldehyde dehydrogenase family. As to quaternary structure, homodimer.

Its subcellular location is the peroxisome. The enzyme catalyses betaine aldehyde + NAD(+) + H2O = glycine betaine + NADH + 2 H(+). It participates in amine and polyamine biosynthesis; betaine biosynthesis via choline pathway; betaine from betaine aldehyde: step 1/1. Dehydrogenase that can use N-acetyl-gamma-aminobutyraldehyde (NAGABald), gamma-guanidinobutyraldehyde (GGBald), betaine aldehyde (Bet-ald), gamma-aminobutyraldehyde (GAB-ald), acetaldehyde, 4-aminobutylaldehyde (AB-ald), 3-aminopropionaldehyde (AP-ald), 4-N-trimethylaminobutyraldehyde (TMAB-ald) and 3-N-trimethylaminopropionaldehyde (TMAP-ald) as substrates. Catalyzes the oxidation of GAB-ald more efficiently than Bet-ald. May convert acetaldehyde into acetate, thus facilitating the production of acetyl-CoA in peroxisomes under anaerobic conditions. The sequence is that of Betaine aldehyde dehydrogenase 1 (BADH1) from Oryza sativa subsp. japonica (Rice).